Reading from the N-terminus, the 291-residue chain is MQENLLEKQFLNHPLYAKIQELKALNLACNFSLDDSVNLSTNSQAKDEILTITKKLKPWRKGPFKIDDLFIDTEWQSFIKFNILKPFMGEISQKCVADIGCNNGYYMFKMLEFNPAKLIGFDPSIKYRLQFELINALAKTPIKYELLGVEDLPNYGLKFDVIFCLGVIYHRSDPIKMLKDLKAGLNKNGVVFLDTMYIEDEREIALVPNKTYSKIPNIYFVPSISALKNWCERAGFKEFEVLATKKTDENEQRKTEWIDSFSLENFLDPKDKNLTIEGYEAPKRVYIRIKI.

Carboxy-S-adenosyl-L-methionine-binding positions include Lys-61, Trp-75, Lys-80, Gly-100, 122-124 (DPS), 149-150 (VE), Tyr-169, and Arg-284.

The protein belongs to the class I-like SAM-binding methyltransferase superfamily. CmoB family. In terms of assembly, homotetramer.

The enzyme catalyses carboxy-S-adenosyl-L-methionine + 5-hydroxyuridine(34) in tRNA = 5-carboxymethoxyuridine(34) in tRNA + S-adenosyl-L-homocysteine + H(+). Functionally, catalyzes carboxymethyl transfer from carboxy-S-adenosyl-L-methionine (Cx-SAM) to 5-hydroxyuridine (ho5U) to form 5-carboxymethoxyuridine (cmo5U) at position 34 in tRNAs. In Campylobacter jejuni subsp. doylei (strain ATCC BAA-1458 / RM4099 / 269.97), this protein is tRNA U34 carboxymethyltransferase.